The sequence spans 353 residues: MERGSPGSSKSVSTFTPDSMSTYVSNCVVCGRLTSLFNYGAHSCSACGSFLRRTLASSKFLDDCKYSGNCFENFKRAIHFECKFCRLHKCVQKGMLDLSRYTHLERLICELSEFDSKRETLFLTMTVSNGFKAEELMWQSSVSLVKKPPHLVFNSHDWGFMNQVTIIDFLKKLEFSKFLSSQDLRSFLKCTHFTQVILKSAVISYNANQNYMSFPNKIDIFPETVTEGTSISVNLQNRIRCRLVNRLIELKVTHEEMLLLCAIAFSNPAIPELSENGRTLLNSYQNVYRSALFQYCSTAYQRNGPSRFNDLLFLLHVVTKTHDDIKKYFTLFQFFQPTEQPSQVHQDVIEFIN.

A DNA-binding region (nuclear receptor) is located at residues 24-102 (VSNCVVCGRL…KGMLDLSRYT (79 aa)). NR C4-type zinc fingers lie at residues 27–47 (CVVC…CSAC) and 64–85 (CKYS…CKFC). In terms of domain architecture, NR LBD spans 119–351 (ETLFLTMTVS…SQVHQDVIEF (233 aa)). The AF-2 stretch occupies residues 340-351 (QPSQVHQDVIEF).

Belongs to the nuclear hormone receptor family.

The protein resides in the nucleus. In terms of biological role, ligand-activated transcription factor. Involved in lifespan extension in a manner dependent upon mitochondrial function. This is Nuclear hormone receptor family member nhr-27 from Caenorhabditis elegans.